Here is a 350-residue protein sequence, read N- to C-terminus: DNA-directed RNA polymerase subunit alpha (350 aa).

The tract at residues 1–226 (MLISQRPTLS…ELFGLARELN (226 aa)) is alpha N-terminal domain (alpha-NTD). Residues 241–350 (ADHIASFALP…NQDYAETEQL (110 aa)) are alpha C-terminal domain (alpha-CTD). Residues 326-350 (ATGTWNSDAGYDLEDNQDYAETEQL) form a disordered region. Positions 336 to 350 (YDLEDNQDYAETEQL) are enriched in acidic residues.

Belongs to the RNA polymerase alpha chain family. In terms of assembly, homodimer. The RNAP catalytic core consists of 2 alpha, 1 beta, 1 beta' and 1 omega subunit. When a sigma factor is associated with the core the holoenzyme is formed, which can initiate transcription.

It carries out the reaction RNA(n) + a ribonucleoside 5'-triphosphate = RNA(n+1) + diphosphate. In terms of biological role, DNA-dependent RNA polymerase catalyzes the transcription of DNA into RNA using the four ribonucleoside triphosphates as substrates. In Mycobacterium sp. (strain JLS), this protein is DNA-directed RNA polymerase subunit alpha.